Reading from the N-terminus, the 368-residue chain is Alanine racemase (368 aa).

Lys40 serves as the catalytic Proton acceptor; specific for D-alanine. N6-(pyridoxal phosphate)lysine is present on Lys40. Arg136 lines the substrate pocket. Tyr263 acts as the Proton acceptor; specific for L-alanine in catalysis. Met310 contacts substrate.

This sequence belongs to the alanine racemase family. Requires pyridoxal 5'-phosphate as cofactor.

It catalyses the reaction L-alanine = D-alanine. It participates in amino-acid biosynthesis; D-alanine biosynthesis; D-alanine from L-alanine: step 1/1. Functionally, catalyzes the interconversion of L-alanine and D-alanine. May also act on other amino acids. The polypeptide is Alanine racemase (alr) (Streptococcus gordonii (strain Challis / ATCC 35105 / BCRC 15272 / CH1 / DL1 / V288)).